Here is a 511-residue protein sequence, read N- to C-terminus: Intermediate cleaving peptidase 55 (511 aa).

5 residues coordinate Mn(2+): aspartate 327, aspartate 338, histidine 417, glutamate 444, and glutamate 467.

Belongs to the peptidase M24B family. Mn(2+) serves as cofactor.

Its subcellular location is the nucleus. It localises to the mitochondrion inner membrane. It carries out the reaction The enzyme cleaves the 36-Pro-Pro-37 bond of cysteine desulfurase (EC 2.8.1.7) removing three amino acid residues (Tyr-Ser-Pro) from the N-terminus after cleavage by mitochondrial processing peptidase.. Aminopeptidase which cleaves preprotein intermediates that carry destabilizing N-ter amino acid residues after the mitochondrial processing peptidase (MPP) cleavage site and is thus critical for stabilization of the mitochondrial proteome. The polypeptide is Intermediate cleaving peptidase 55 (ICP55) (Saccharomyces cerevisiae (strain ATCC 204508 / S288c) (Baker's yeast)).